The sequence spans 473 residues: ATP synthase subunit beta (473 aa).

Residue 158-165 participates in ATP binding; that stretch reads GGAGVGKT.

The protein belongs to the ATPase alpha/beta chains family. As to quaternary structure, F-type ATPases have 2 components, CF(1) - the catalytic core - and CF(0) - the membrane proton channel. CF(1) has five subunits: alpha(3), beta(3), gamma(1), delta(1), epsilon(1). CF(0) has three main subunits: a(1), b(2) and c(9-12). The alpha and beta chains form an alternating ring which encloses part of the gamma chain. CF(1) is attached to CF(0) by a central stalk formed by the gamma and epsilon chains, while a peripheral stalk is formed by the delta and b chains.

It is found in the cell membrane. The catalysed reaction is ATP + H2O + 4 H(+)(in) = ADP + phosphate + 5 H(+)(out). Functionally, produces ATP from ADP in the presence of a proton gradient across the membrane. The catalytic sites are hosted primarily by the beta subunits. The chain is ATP synthase subunit beta from Bacillus pumilus (strain SAFR-032).